We begin with the raw amino-acid sequence, 151 residues long: Chaperonin GroEL (151 aa).

ATP is bound at residue 41–45 (DGTTT).

The protein belongs to the chaperonin (HSP60) family. As to quaternary structure, forms a cylinder of 14 subunits composed of two heptameric rings stacked back-to-back. Interacts with the co-chaperonin GroES.

It is found in the cytoplasm. It carries out the reaction ATP + H2O + a folded polypeptide = ADP + phosphate + an unfolded polypeptide.. Functionally, together with its co-chaperonin GroES, plays an essential role in assisting protein folding. The GroEL-GroES system forms a nano-cage that allows encapsulation of the non-native substrate proteins and provides a physical environment optimized to promote and accelerate protein folding. This is Chaperonin GroEL from Mycobacterium marinum.